A 399-amino-acid polypeptide reads, in one-letter code: S-adenosylmethionine synthase (399 aa).

An ATP-binding site is contributed by His17. Asp19 contacts Mg(2+). Glu45 contributes to the K(+) binding site. Glu58 and Gln101 together coordinate L-methionine. Residues 101–111 (QSPDIAQGVDE) form a flexible loop region. ATP is bound by residues 177-179 (DAK), 244-245 (RF), Asp253, 259-260 (RK), Ala276, and Lys280. Asp253 provides a ligand contact to L-methionine. Residue Lys284 coordinates L-methionine.

The protein belongs to the AdoMet synthase family. As to quaternary structure, homotetramer; dimer of dimers. Requires Mg(2+) as cofactor. K(+) is required as a cofactor.

It is found in the cytoplasm. The catalysed reaction is L-methionine + ATP + H2O = S-adenosyl-L-methionine + phosphate + diphosphate. The protein operates within amino-acid biosynthesis; S-adenosyl-L-methionine biosynthesis; S-adenosyl-L-methionine from L-methionine: step 1/1. In terms of biological role, catalyzes the formation of S-adenosylmethionine (AdoMet) from methionine and ATP. The overall synthetic reaction is composed of two sequential steps, AdoMet formation and the subsequent tripolyphosphate hydrolysis which occurs prior to release of AdoMet from the enzyme. The polypeptide is S-adenosylmethionine synthase (Listeria monocytogenes serovar 1/2a (strain ATCC BAA-679 / EGD-e)).